A 180-amino-acid polypeptide reads, in one-letter code: Large ribosomal subunit protein uL6c (180 aa).

It belongs to the universal ribosomal protein uL6 family. In terms of assembly, part of the 50S ribosomal subunit.

The protein localises to the plastid. Its subcellular location is the chloroplast. Binds 23S rRNA. The chain is Large ribosomal subunit protein uL6c (rpl6) from Pyropia yezoensis (Susabi-nori).